The following is a 309-amino-acid chain: Dihydroorotate dehydrogenase B (NAD(+)), catalytic subunit (309 aa).

Residues serine 21 and 45-46 (KA) each bind FMN. Residues lysine 45 and 69 to 73 (NAIGL) contribute to the substrate site. The FMN site is built by asparagine 99 and asparagine 127. Position 127 (asparagine 127) interacts with substrate. The active-site Nucleophile is the cysteine 130. Positions 165 and 191 each coordinate FMN. Substrate is bound at residue 192 to 193 (NT). FMN contacts are provided by residues glycine 217, 243 to 244 (GG), and 265 to 266 (GT).

It belongs to the dihydroorotate dehydrogenase family. Type 1 subfamily. As to quaternary structure, heterotetramer of 2 PyrK and 2 PyrD type B subunits. The cofactor is FMN.

It localises to the cytoplasm. It catalyses the reaction (S)-dihydroorotate + NAD(+) = orotate + NADH + H(+). The protein operates within pyrimidine metabolism; UMP biosynthesis via de novo pathway; orotate from (S)-dihydroorotate (NAD(+) route): step 1/1. Catalyzes the conversion of dihydroorotate to orotate with NAD(+) as electron acceptor. This is Dihydroorotate dehydrogenase B (NAD(+)), catalytic subunit (pyrD) from Bacillus thuringiensis (strain Al Hakam).